Consider the following 133-residue polypeptide: UPF0292 protein TK1411 (133 aa).

In terms of domain architecture, Toprim spans 20–100 (EGALIVEGLR…SVDIETWKEL (81 aa)). The Mg(2+) site is built by Glu-26, Asp-69, and Asp-71.

It belongs to the UPF0292 family. The cofactor is Mg(2+).

In Thermococcus kodakarensis (strain ATCC BAA-918 / JCM 12380 / KOD1) (Pyrococcus kodakaraensis (strain KOD1)), this protein is UPF0292 protein TK1411.